Consider the following 395-residue polypeptide: Elongation factor Tu (395 aa).

A tr-type G domain is found at 10–205 (KPHCNIGTIG…AVDSYIPQPE (196 aa)). The segment at 19-26 (GHVDHGKT) is G1. 19–26 (GHVDHGKT) provides a ligand contact to GTP. T26 contributes to the Mg(2+) binding site. Residues 60-64 (GITIA) are G2. Residues 81–84 (DCPG) form a G3 region. GTP-binding positions include 81-85 (DCPGH) and 136-139 (NKMD). The interval 136–139 (NKMD) is G4. Residues 173-175 (SAL) form a G5 region.

This sequence belongs to the TRAFAC class translation factor GTPase superfamily. Classic translation factor GTPase family. EF-Tu/EF-1A subfamily. As to quaternary structure, monomer.

It is found in the cytoplasm. It catalyses the reaction GTP + H2O = GDP + phosphate + H(+). Its function is as follows. GTP hydrolase that promotes the GTP-dependent binding of aminoacyl-tRNA to the A-site of ribosomes during protein biosynthesis. The polypeptide is Elongation factor Tu (Acidiphilium cryptum (strain JF-5)).